The primary structure comprises 334 residues: Iron-uptake system permease protein FeuB (334 aa).

9 consecutive transmembrane segments (helical) span residues 9–29 (IILI…ILYG), 63–83 (AAGA…MQGI), 91–111 (PSIM…MVLL), 119–139 (MMIY…GLAA), 150–170 (LAII…AMSI), 191–211 (PDFL…AISL), 243–263 (VIIL…VGLV), 281–301 (PCSC…SRFI), and 305–325 (FETP…LYLI).

This sequence belongs to the binding-protein-dependent transport system permease family. FecCD subfamily. As to quaternary structure, the complex is composed of one ATP-binding protein (YusV), two transmembrane proteins (FeuB and FeuC) and a solute-binding protein (FeuA).

The protein localises to the cell membrane. Its subcellular location is the membrane raft. In terms of biological role, involved in the uptake of iron. Probably responsible for the translocation of the substrate across the membrane. Its function is as follows. Part of the ABC transporter complex FeuABC/YusV involved in import of the catecholate siderophores bacillibactin and enterobactin. The polypeptide is Iron-uptake system permease protein FeuB (feuB) (Bacillus subtilis (strain 168)).